The following is a 269-amino-acid chain: Energy-coupling factor transporter transmembrane protein EcfT (269 aa).

A run of 6 helical transmembrane segments spans residues 45–65 (RFFLGWGVLLAFIVFLSRVSL), 75–95 (VLWLLVFTVLLHALFTPGEAI), 110–130 (MAALMGVRLVLLVAFAGLLTL), 153–173 (FPAHEMAMMMTIALRFIPTLL), 202–222 (FVPVLVPLFLIVFQRAEDLAL), and 244–264 (CLEDWVALGLMSVSVAGLLFL).

It belongs to the energy-coupling factor EcfT family. In terms of assembly, forms a stable energy-coupling factor (ECF) transporter complex composed of 2 membrane-embedded substrate-binding proteins (S component), 2 ATP-binding proteins (A component) and 2 transmembrane proteins (T component). May be able to interact with more than 1 S component at a time.

Its subcellular location is the cell membrane. Its function is as follows. Transmembrane (T) component of an energy-coupling factor (ECF) ABC-transporter complex. Unlike classic ABC transporters this ECF transporter provides the energy necessary to transport a number of different substrates. The protein is Energy-coupling factor transporter transmembrane protein EcfT of Thermanaerovibrio acidaminovorans (strain ATCC 49978 / DSM 6589 / Su883) (Selenomonas acidaminovorans).